The chain runs to 829 residues: MARRDFIKQTAAAAAATVAGVPLTGYTQNIVTESEAAKLKWSKAPCRFCGTGCGVNVAVKDNQVVATHGDFNAEVNKGLNCVKGYFLSKIMYGSDRLTQPLLRMKDGKYAKDGEFAPVSWDQAFDVMAEQFKRVLKDKGPEAVGMFGSGQWTVWEGYAALKLMKAGFRTNNLDPNARHCMASAAVGFMRTFGADEPMGCYDDIENADAFVLWGSNMAEMHPILWTRVTDRRLSAPATKVAVLSTFEHRSYELADLTLTFEPQSDLAILNYIANHIIRTKRVNRDFVDKHTVFREGNADIGYGLRPEHPLQQAARNAGDAGGSKPITFDDFARFVSKYDLEYTAKLSGVPKNRLEELAELYADPKVRVTSFWTMGFNQHTRGVWCNNMVYNIHLLTGKISTPGNSPFSLTGQPSACGTAREVGTFSHRLPADLVVTNPEHRRHAEEIWKLPDGTIPSKVGAHAVLQNRMLKDGKINAYWVMVNNNMQAAANLMNEGLPGYRNPENFIVVSDAYPTVTTLSADLILPAAMWVEKEGAYGNAERRTQFWHQLVDAPGQARSDLWQLVEFSKRFKVEEVWPADLLAKKPEYRGKTLYDVLFANGKVNQFPNTELDAEYANQEAQAFGFYLQKGLFEEYAEFGRGHGHDLAPFDVYHKARGLRWPVVDGKETLWRYREGSDPYVKPGTGFQFYGNPDGKAVIFALPYEPPPEAPDKEYPFWLSTGRVLEHWHSGSMTRRVPELYKAFPEAVCFMHPDDAQALGVRRGVEVEVVSRRGRMRTRVETRGRDKPPRGLVFVPWFDAGQLINKVTLDATDPISFQTDFKKCAVKIVKV.

Residues 1–36 (MARRDFIKQTAAAAAATVAGVPLTGYTQNIVTESEA) constitute a signal peptide (tat-type signal). A 4Fe-4S Mo/W bis-MGD-type domain is found at 39–95 (LKWSKAPCRFCGTGCGVNVAVKDNQVVATHGDFNAEVNKGLNCVKGYFLSKIMYGSD). [4Fe-4S] cluster is bound by residues cysteine 46, cysteine 49, cysteine 53, and cysteine 81. Mo-bis(molybdopterin guanine dinucleotide) contacts are provided by residues lysine 83, glutamine 150, asparagine 175, cysteine 179, 212-219 (WGSNMAEM), 243-247 (STFEH), 262-264 (QSD), methionine 373, glutamine 377, asparagine 483, 509-510 (SD), lysine 532, aspartate 559, and 719-728 (TGRVLEHWHS). A substrate-binding site is contributed by tryptophan 795. Residues asparagine 803 and lysine 820 each contribute to the Mo-bis(molybdopterin guanine dinucleotide) site.

It belongs to the prokaryotic molybdopterin-containing oxidoreductase family. NasA/NapA/NarB subfamily. Component of the periplasmic nitrate reductase NapAB complex composed of NapA and NapB. The cofactor is [4Fe-4S] cluster. It depends on Mo-bis(molybdopterin guanine dinucleotide) as a cofactor. Predicted to be exported by the Tat system. The position of the signal peptide cleavage has not been experimentally proven.

Its subcellular location is the periplasm. The catalysed reaction is 2 Fe(II)-[cytochrome] + nitrate + 2 H(+) = 2 Fe(III)-[cytochrome] + nitrite + H2O. Catalytic subunit of the periplasmic nitrate reductase complex NapAB. Receives electrons from NapB and catalyzes the reduction of nitrate to nitrite. In Bordetella bronchiseptica (strain ATCC BAA-588 / NCTC 13252 / RB50) (Alcaligenes bronchisepticus), this protein is Periplasmic nitrate reductase.